Reading from the N-terminus, the 196-residue chain is Pyridoxal 5'-phosphate synthase subunit PdxT (196 aa).

47–49 (GES) contacts L-glutamine. The Nucleophile role is filled by Cys-79. Residues Arg-106 and 134–135 (IR) each bind L-glutamine. Active-site charge relay system residues include His-170 and Glu-172.

This sequence belongs to the glutaminase PdxT/SNO family. As to quaternary structure, in the presence of PdxS, forms a dodecamer of heterodimers. Only shows activity in the heterodimer.

The catalysed reaction is aldehydo-D-ribose 5-phosphate + D-glyceraldehyde 3-phosphate + L-glutamine = pyridoxal 5'-phosphate + L-glutamate + phosphate + 3 H2O + H(+). It carries out the reaction L-glutamine + H2O = L-glutamate + NH4(+). The protein operates within cofactor biosynthesis; pyridoxal 5'-phosphate biosynthesis. Catalyzes the hydrolysis of glutamine to glutamate and ammonia as part of the biosynthesis of pyridoxal 5'-phosphate. The resulting ammonia molecule is channeled to the active site of PdxS. The chain is Pyridoxal 5'-phosphate synthase subunit PdxT from Bacillus cytotoxicus (strain DSM 22905 / CIP 110041 / 391-98 / NVH 391-98).